Reading from the N-terminus, the 66-residue chain is Large ribosomal subunit protein bL35 (66 aa).

Belongs to the bacterial ribosomal protein bL35 family.

This chain is Large ribosomal subunit protein bL35, found in Ruegeria pomeroyi (strain ATCC 700808 / DSM 15171 / DSS-3) (Silicibacter pomeroyi).